Reading from the N-terminus, the 112-residue chain is Signal recognition particle 19 kDa protein (112 aa).

The protein belongs to the SRP19 family. As to quaternary structure, part of the signal recognition particle protein translocation system, which is composed of SRP and FtsY. Archaeal SRP consists of a 7S RNA molecule of 300 nucleotides and two protein subunits: SRP54 and SRP19.

It is found in the cytoplasm. Involved in targeting and insertion of nascent membrane proteins into the cytoplasmic membrane. Binds directly to 7S RNA and mediates binding of the 54 kDa subunit of the SRP. The sequence is that of Signal recognition particle 19 kDa protein from Aeropyrum pernix (strain ATCC 700893 / DSM 11879 / JCM 9820 / NBRC 100138 / K1).